Reading from the N-terminus, the 176-residue chain is Nucleoside triphosphate/diphosphate phosphatase (176 aa).

Arg23 (proton donor) is an active-site residue. The Mg(2+) site is built by Asn87, Asp103, Asp105, Asp107, Asp120, and Glu123.

Belongs to the Ntdp family. The cofactor is Mg(2+).

The catalysed reaction is a ribonucleoside 5'-triphosphate + H2O = a ribonucleoside 5'-diphosphate + phosphate + H(+). The enzyme catalyses a ribonucleoside 5'-diphosphate + H2O = a ribonucleoside 5'-phosphate + phosphate + H(+). Functionally, has nucleoside phosphatase activity towards nucleoside triphosphates and nucleoside diphosphates. This Bacillus velezensis (strain DSM 23117 / BGSC 10A6 / LMG 26770 / FZB42) (Bacillus amyloliquefaciens subsp. plantarum) protein is Nucleoside triphosphate/diphosphate phosphatase.